A 60-amino-acid chain; its full sequence is Large ribosomal subunit protein uL30 (60 aa).

This sequence belongs to the universal ribosomal protein uL30 family. In terms of assembly, part of the 50S ribosomal subunit.

The chain is Large ribosomal subunit protein uL30 from Saccharopolyspora erythraea (strain ATCC 11635 / DSM 40517 / JCM 4748 / NBRC 13426 / NCIMB 8594 / NRRL 2338).